A 415-amino-acid polypeptide reads, in one-letter code: Lipoyl synthase, mitochondrial (415 aa).

The transit peptide at 1–32 (MAASTNRLRFLYSSARTVPQTGSITPISRRTY) directs the protein to the mitochondrion. A compositionally biased stretch (polar residues) spans 20-32 (QTGSITPISRRTY). A disordered region spans residues 20-53 (QTGSITPISRRTYATTEPSPSATGAPATARKRTN). Over residues 33–47 (ATTEPSPSATGAPAT) the composition is skewed to low complexity. 7 residues coordinate [4Fe-4S] cluster: Cys-132, Cys-137, Cys-143, Cys-163, Cys-167, Cys-170, and Ser-378. In terms of domain architecture, Radical SAM core spans 146–367 (GSDKSAATAT…RQRALDMGFL (222 aa)). Positions 395–415 (AAGTAGESVTDSKAAVDEATR) are disordered.

This sequence belongs to the radical SAM superfamily. Lipoyl synthase family. Requires [4Fe-4S] cluster as cofactor.

It localises to the mitochondrion. The enzyme catalyses [[Fe-S] cluster scaffold protein carrying a second [4Fe-4S](2+) cluster] + N(6)-octanoyl-L-lysyl-[protein] + 2 oxidized [2Fe-2S]-[ferredoxin] + 2 S-adenosyl-L-methionine + 4 H(+) = [[Fe-S] cluster scaffold protein] + N(6)-[(R)-dihydrolipoyl]-L-lysyl-[protein] + 4 Fe(3+) + 2 hydrogen sulfide + 2 5'-deoxyadenosine + 2 L-methionine + 2 reduced [2Fe-2S]-[ferredoxin]. It functions in the pathway protein modification; protein lipoylation via endogenous pathway; protein N(6)-(lipoyl)lysine from octanoyl-[acyl-carrier-protein]: step 2/2. In terms of biological role, catalyzes the radical-mediated insertion of two sulfur atoms into the C-6 and C-8 positions of the octanoyl moiety bound to the lipoyl domains of lipoate-dependent enzymes, thereby converting the octanoylated domains into lipoylated derivatives. The polypeptide is Lipoyl synthase, mitochondrial (Aspergillus flavus (strain ATCC 200026 / FGSC A1120 / IAM 13836 / NRRL 3357 / JCM 12722 / SRRC 167)).